The chain runs to 360 residues: Photosystem II protein D1 (360 aa).

The next 3 helical transmembrane spans lie at 30-47, 119-134, and 143-157; these read YVGWFGVLMIPCLLTAAA, HFLIGISAYMGRQWEL, and WICVAYSAPVSAAFA. Chlorophyll a is bound at residue His-119. Residue Tyr-127 participates in pheophytin a binding. 2 residues coordinate [CaMn4O5] cluster: Asp-171 and Glu-190. A helical transmembrane segment spans residues 198–219; it reads FHMAGVAGMFGGSLFSAMHGSL. Chlorophyll a is bound at residue His-199. Residues His-216 and 265–266 each bind a quinone; that span reads SF. His-216 provides a ligand contact to Fe cation. His-273 is a Fe cation binding site. The helical transmembrane segment at 275-289 threads the bilayer; sequence FLAVFPVVCVWLTSM. Residues His-333, Glu-334, Asp-343, and Ala-345 each coordinate [CaMn4O5] cluster. The propeptide occupies 346–360; it reads AAESTTVALSAPAIG.

The protein belongs to the reaction center PufL/M/PsbA/D family. PSII is composed of 1 copy each of membrane proteins PsbA, PsbB, PsbC, PsbD, PsbE, PsbF, PsbH, PsbI, PsbJ, PsbK, PsbL, PsbM, PsbT, PsbX, PsbY, Psb30/Ycf12, peripheral proteins PsbO, CyanoQ (PsbQ), PsbU, PsbV and a large number of cofactors. It forms dimeric complexes. The D1/D2 heterodimer binds P680, chlorophylls that are the primary electron donor of PSII, and subsequent electron acceptors. It shares a non-heme iron and each subunit binds pheophytin, quinone, additional chlorophylls, carotenoids and lipids. D1 provides most of the ligands for the Mn4-Ca-O5 cluster of the oxygen-evolving complex (OEC). There is also a Cl(-1) ion associated with D1 and D2, which is required for oxygen evolution. The PSII complex binds additional chlorophylls, carotenoids and specific lipids. is required as a cofactor. Post-translationally, tyr-162 forms a radical intermediate that is referred to as redox-active TyrZ, YZ or Y-Z. C-terminally processed by CtpA; processing is essential to allow assembly of the oxygen-evolving complex and thus photosynthetic growth.

Its subcellular location is the cellular thylakoid membrane. It catalyses the reaction 2 a plastoquinone + 4 hnu + 2 H2O = 2 a plastoquinol + O2. Its function is as follows. Photosystem II (PSII) is a light-driven water:plastoquinone oxidoreductase that uses light energy to abstract electrons from H(2)O, generating O(2) and a proton gradient subsequently used for ATP formation. It consists of a core antenna complex that captures photons, and an electron transfer chain that converts photonic excitation into a charge separation. The D1/D2 (PsbA/PsbD) reaction center heterodimer binds P680, the primary electron donor of PSII as well as several subsequent electron acceptors. This Prochlorococcus marinus (strain MIT 9301) protein is Photosystem II protein D1.